A 529-amino-acid chain; its full sequence is Lysine--tRNA ligase (529 aa).

The 'HIGH' region signature appears at I29 to N37. The 'KMSKS' region signature appears at A274–S278. K277 contributes to the ATP binding site.

This sequence belongs to the class-I aminoacyl-tRNA synthetase family.

The protein localises to the cytoplasm. It catalyses the reaction tRNA(Lys) + L-lysine + ATP = L-lysyl-tRNA(Lys) + AMP + diphosphate. The polypeptide is Lysine--tRNA ligase (Methanosphaera stadtmanae (strain ATCC 43021 / DSM 3091 / JCM 11832 / MCB-3)).